A 73-amino-acid chain; its full sequence is Translation initiation factor IF-1 (73 aa).

Positions M1 to K72 constitute an S1-like domain.

Belongs to the IF-1 family. In terms of assembly, component of the 30S ribosomal translation pre-initiation complex which assembles on the 30S ribosome in the order IF-2 and IF-3, IF-1 and N-formylmethionyl-tRNA(fMet); mRNA recruitment can occur at any time during PIC assembly.

The protein localises to the cytoplasm. Functionally, one of the essential components for the initiation of protein synthesis. Stabilizes the binding of IF-2 and IF-3 on the 30S subunit to which N-formylmethionyl-tRNA(fMet) subsequently binds. Helps modulate mRNA selection, yielding the 30S pre-initiation complex (PIC). Upon addition of the 50S ribosomal subunit IF-1, IF-2 and IF-3 are released leaving the mature 70S translation initiation complex. In Syntrophobacter fumaroxidans (strain DSM 10017 / MPOB), this protein is Translation initiation factor IF-1.